Here is a 432-residue protein sequence, read N- to C-terminus: Polyamine export protein (432 aa).

Residues 1–201 form the CNNM transmembrane domain; sequence MIMELFHTIL…AEAGVLKTQE (201 aa). 4 helical membrane passes run 2-22, 61-81, 100-120, and 138-158; these read IMELFHTILAIVALILSSAVV, FITVVQILLNMVAILGGGIGE, WIAPTASTIAFILVTCLFILF, and LSVVGIMNFSMYVFKPLVWFF. 2 CBS domains span residues 220–279 and 286–345; these read MTTR…NENV and LLRK…SNEE.

Belongs to the UPF0053 family. PaeA subfamily.

It is found in the cell inner membrane. Functionally, involved in cadaverine and putrescine tolerance in stationary phase. May facilitate the efflux of both cadaverine and putrescine from the cytoplasm, reducing potentially toxic levels under certain stress conditions. This chain is Polyamine export protein, found in Haemophilus influenzae (strain ATCC 51907 / DSM 11121 / KW20 / Rd).